Here is a 272-residue protein sequence, read N- to C-terminus: Large ribosomal subunit protein uL4 (272 aa).

It belongs to the universal ribosomal protein uL4 family. In terms of assembly, part of the 50S ribosomal subunit.

In terms of biological role, one of the primary rRNA binding proteins, this protein initially binds near the 5'-end of the 23S rRNA. It is important during the early stages of 50S assembly. It makes multiple contacts with different domains of the 23S rRNA in the assembled 50S subunit and ribosome. Its function is as follows. Forms part of the polypeptide exit tunnel. In Aeropyrum pernix (strain ATCC 700893 / DSM 11879 / JCM 9820 / NBRC 100138 / K1), this protein is Large ribosomal subunit protein uL4.